The primary structure comprises 325 residues: Elongation factor P--(R)-beta-lysine ligase (325 aa).

Substrate is bound at residue 76–78; the sequence is SPE. Residues 100-102 and Asn-109 contribute to the ATP site; that span reads RNE. Residue Tyr-118 participates in substrate binding. ATP is bound at residue 244–245; sequence EL. Glu-251 serves as a coordination point for substrate. Gly-300 is an ATP binding site.

Belongs to the class-II aminoacyl-tRNA synthetase family. EpmA subfamily. Homodimer.

It carries out the reaction D-beta-lysine + L-lysyl-[protein] + ATP = N(6)-((3R)-3,6-diaminohexanoyl)-L-lysyl-[protein] + AMP + diphosphate + H(+). With EpmB is involved in the beta-lysylation step of the post-translational modification of translation elongation factor P (EF-P). Catalyzes the ATP-dependent activation of (R)-beta-lysine produced by EpmB, forming a lysyl-adenylate, from which the beta-lysyl moiety is then transferred to the epsilon-amino group of a conserved specific lysine residue in EF-P. The chain is Elongation factor P--(R)-beta-lysine ligase from Pectobacterium atrosepticum (strain SCRI 1043 / ATCC BAA-672) (Erwinia carotovora subsp. atroseptica).